The chain runs to 287 residues: Gene 31 protein (287 aa).

The disordered stretch occupies residues 13 to 58; it reads AGRPAGLPGRGGQPGLAGAEGGEGRAGPGAHGDGVRQGGGLQTGGA. The segment covering 20 to 58 has biased composition (gly residues); it reads PGRGGQPGLAGAEGGEGRAGPGAHGDGVRQGGGLQTGGA.

This sequence belongs to the herpesviridae UL92 family.

In Equine herpesvirus 2 (strain 86/87) (EHV-2), this protein is Gene 31 protein (31).